A 301-amino-acid chain; its full sequence is Protease HtpX (301 aa).

2 helical membrane-spanning segments follow: residues 4–24 (IGLF…ILSL) and 38–58 (LGNL…ISLL). Histidine 147 lines the Zn(2+) pocket. Glutamate 148 is an active-site residue. Histidine 151 contacts Zn(2+). 2 helical membrane passes run 155–175 (GDMV…MFFA) and 200–220 (FAIT…IVMW). Glutamate 226 serves as a coordination point for Zn(2+).

It belongs to the peptidase M48B family. Zn(2+) is required as a cofactor.

Its subcellular location is the cell inner membrane. This Acinetobacter baylyi (strain ATCC 33305 / BD413 / ADP1) protein is Protease HtpX.